Here is a 197-residue protein sequence, read N- to C-terminus: UPF0200 protein MJ1399 (197 aa).

Residue 8–15 (GMPGAGKS) participates in ATP binding.

Belongs to the UPF0200 family.

This Methanocaldococcus jannaschii (strain ATCC 43067 / DSM 2661 / JAL-1 / JCM 10045 / NBRC 100440) (Methanococcus jannaschii) protein is UPF0200 protein MJ1399.